The sequence spans 156 residues: EPIDERMAL PATTERNING FACTOR-like protein 6 (156 aa).

An N-terminal signal peptide occupies residues 1–47; it reads MGFERTSSSLSLLSSSLPSSLQPSENTRAKFSLFYLLLLFFVLCVIA. 3 disulfides stabilise this stretch: cysteine 113–cysteine 147, cysteine 117–cysteine 123, and cysteine 120–cysteine 149.

Belongs to the plant cysteine rich small secretory peptide family. Epidermal patterning factor subfamily. Interacts with ERECTA. Expressed in the internal layers of the root, hypocotyl and stems, and in the midrib of developing rosette leaves. Detected in a ring of cells surrounding the vascular elements. Expressed in developing stems soon after bolting, in inflorescence stems, near the root apex and in the chalazal region of ovules. Not found in cotyledons or in stomatal precursors or stomata.

It localises to the secreted. In terms of biological role, acts primarily as positive regulator of inflorescence growth. Endodermal expression is sufficient for proper inflorescence architecture. Redundantly involved with EPFL4 in procambial development regulation. Also acts as tissue-specific regulator of epidermal pattern. Controls stomatal patterning by repressing stomatal production. TMM (AC Q9SSD1) functions to dampen or block CHAL signaling. Not processed by SDD1 (AC O64495). Acts as growth-regulatory ligand for ERECTA family receptors. The sequence is that of EPIDERMAL PATTERNING FACTOR-like protein 6 from Arabidopsis thaliana (Mouse-ear cress).